A 538-amino-acid polypeptide reads, in one-letter code: Putative cysteine ligase BshC (538 aa).

Residues 454 to 482 (LEKNAGFIQDQLQFLEKTVIRRIEEKENY) adopt a coiled-coil conformation.

Belongs to the BshC family.

Functionally, involved in bacillithiol (BSH) biosynthesis. May catalyze the last step of the pathway, the addition of cysteine to glucosamine malate (GlcN-Mal) to generate BSH. The sequence is that of Putative cysteine ligase BshC from Bacillus licheniformis (strain ATCC 14580 / DSM 13 / JCM 2505 / CCUG 7422 / NBRC 12200 / NCIMB 9375 / NCTC 10341 / NRRL NRS-1264 / Gibson 46).